The chain runs to 306 residues: Tryptophan 2,3-dioxygenase (306 aa).

A disordered region spans residues 1-33 (MQPPGDDAAPRCPFAGAHAPDAPHVPEAAGDDA). Substrate contacts are provided by residues 75 to 79 (FIIQH), tyrosine 137, and arginine 141. Heme is bound at residue histidine 264. Threonine 278 serves as a coordination point for substrate.

Belongs to the tryptophan 2,3-dioxygenase family. Homotetramer. Requires heme as cofactor.

The enzyme catalyses L-tryptophan + O2 = N-formyl-L-kynurenine. It participates in amino-acid degradation; L-tryptophan degradation via kynurenine pathway; L-kynurenine from L-tryptophan: step 1/2. Functionally, heme-dependent dioxygenase that catalyzes the oxidative cleavage of the L-tryptophan (L-Trp) pyrrole ring and converts L-tryptophan to N-formyl-L-kynurenine. Catalyzes the oxidative cleavage of the indole moiety. This is Tryptophan 2,3-dioxygenase from Burkholderia pseudomallei (strain 668).